We begin with the raw amino-acid sequence, 517 residues long: Crotonobetaine/carnitine--CoA ligase (517 aa).

It belongs to the ATP-dependent AMP-binding enzyme family.

The catalysed reaction is 4-(trimethylamino)butanoate + ATP + CoA = 4-(trimethylamino)butanoyl-CoA + AMP + diphosphate. It catalyses the reaction crotonobetaine + ATP + CoA = crotonobetainyl-CoA + AMP + diphosphate. It carries out the reaction (R)-carnitine + ATP + CoA = (R)-carnitinyl-CoA + AMP + diphosphate. It functions in the pathway amine and polyamine metabolism; carnitine metabolism. In terms of biological role, catalyzes the transfer of CoA to carnitine, generating the initial carnitinyl-CoA needed for the CaiB reaction cycle. Also has activity toward crotonobetaine and gamma-butyrobetaine. In Shigella flexneri, this protein is Crotonobetaine/carnitine--CoA ligase.